The sequence spans 423 residues: Protein MANNAN SYNTHESIS-RELATED 2 (423 aa).

Residues 1–6 (MGVDLR) are Cytoplasmic-facing. Residues 7-26 (QVVAGILTITMFVMLGQMLH) traverse the membrane as a helical; Signal-anchor for type II membrane protein segment. Topologically, residues 27–423 (RDYFDAVQEK…KNHLAYSCFC (397 aa)) are lumenal. 264-266 (DLR) contributes to the substrate binding site.

This sequence belongs to the glycosyltransferase GT106 family. In terms of tissue distribution, widely expressed.

The protein resides in the golgi apparatus membrane. Its pathway is glycan biosynthesis. In terms of biological role, glycosyltransferase involved in mannan biosynthesis. This chain is Protein MANNAN SYNTHESIS-RELATED 2, found in Arabidopsis thaliana (Mouse-ear cress).